A 191-amino-acid chain; its full sequence is Fe/S biogenesis protein NfuA (191 aa).

The [4Fe-4S] cluster site is built by C149 and C152.

This sequence belongs to the NfuA family. In terms of assembly, homodimer. The cofactor is [4Fe-4S] cluster.

Involved in iron-sulfur cluster biogenesis. Binds a 4Fe-4S cluster, can transfer this cluster to apoproteins, and thereby intervenes in the maturation of Fe/S proteins. Could also act as a scaffold/chaperone for damaged Fe/S proteins. This chain is Fe/S biogenesis protein NfuA, found in Salmonella paratyphi A (strain ATCC 9150 / SARB42).